The chain runs to 198 residues: Proteasome subunit beta 1 (198 aa).

A propeptide spans 1–6 (removed in mature form; by autocatalysis); that stretch reads MSGPGA. The Nucleophile role is filled by T7.

It belongs to the peptidase T1B family. The 20S proteasome core is composed of 14 alpha and 14 beta subunits that assemble into four stacked heptameric rings, resulting in a barrel-shaped structure. The two inner rings, each composed of seven catalytic beta subunits, are sandwiched by two outer rings, each composed of seven alpha subunits. The catalytic chamber with the active sites is on the inside of the barrel. Has a gated structure, the ends of the cylinder being occluded by the N-termini of the alpha-subunits. Is capped at one or both ends by the proteasome regulatory ATPase, PAN.

Its subcellular location is the cytoplasm. The catalysed reaction is Cleavage of peptide bonds with very broad specificity.. The formation of the proteasomal ATPase PAN-20S proteasome complex, via the docking of the C-termini of PAN into the intersubunit pockets in the alpha-rings, triggers opening of the gate for substrate entry. Interconversion between the open-gate and close-gate conformations leads to a dynamic regulation of the 20S proteasome proteolysis activity. Component of the proteasome core, a large protease complex with broad specificity involved in protein degradation. The sequence is that of Proteasome subunit beta 1 from Ignicoccus hospitalis (strain KIN4/I / DSM 18386 / JCM 14125).